Reading from the N-terminus, the 414-residue chain is uncharacterized protein (414 aa).

This sequence belongs to the glycosyltransferase 28 family.

This is an uncharacterized protein from Mycobacterium tuberculosis (strain CDC 1551 / Oshkosh).